The following is a 211-amino-acid chain: 3-demethoxyubiquinol 3-hydroxylase (211 aa).

Fe cation is bound by residues Glu60, Glu90, His93, Glu142, Glu174, and His177.

The protein belongs to the COQ7 family. It depends on Fe cation as a cofactor.

The protein resides in the cell membrane. It catalyses the reaction a 5-methoxy-2-methyl-3-(all-trans-polyprenyl)benzene-1,4-diol + AH2 + O2 = a 3-demethylubiquinol + A + H2O. Its pathway is cofactor biosynthesis; ubiquinone biosynthesis. Catalyzes the hydroxylation of 2-nonaprenyl-3-methyl-6-methoxy-1,4-benzoquinol during ubiquinone biosynthesis. In Francisella tularensis subsp. holarctica (strain FTNF002-00 / FTA), this protein is 3-demethoxyubiquinol 3-hydroxylase.